We begin with the raw amino-acid sequence, 252 residues long: MMLHAQHMPGQPGAPSLVFLHGFSGDCREWQSVGEQFHGCSRLYIDLPGHGGSTAIPVGGFADVIRLLRATLISYNILKFWLVGYSLGGRVAMMAACQGIPGLCGLVVEGGHPGLQNEQARAERRLSDGRWAERFRREPLTEVFHDWYQQPVFASLTAQQRQALTALRSQNNGETLAAMLEATSLAAQPDLREALNALAFPFYYLCGERDSKFRALAQEVAATCHVIRNAGHNAHRENPAGVVDSLAQILRL.

Belongs to the AB hydrolase superfamily. MenH family. In terms of assembly, monomer.

The catalysed reaction is 5-enolpyruvoyl-6-hydroxy-2-succinyl-cyclohex-3-ene-1-carboxylate = (1R,6R)-6-hydroxy-2-succinyl-cyclohexa-2,4-diene-1-carboxylate + pyruvate. Its pathway is quinol/quinone metabolism; 1,4-dihydroxy-2-naphthoate biosynthesis; 1,4-dihydroxy-2-naphthoate from chorismate: step 3/7. The protein operates within quinol/quinone metabolism; menaquinone biosynthesis. In terms of biological role, catalyzes a proton abstraction reaction that results in 2,5-elimination of pyruvate from 2-succinyl-5-enolpyruvyl-6-hydroxy-3-cyclohexene-1-carboxylate (SEPHCHC) and the formation of 2-succinyl-6-hydroxy-2,4-cyclohexadiene-1-carboxylate (SHCHC). This chain is 2-succinyl-6-hydroxy-2,4-cyclohexadiene-1-carboxylate synthase, found in Salmonella agona (strain SL483).